Here is a 364-residue protein sequence, read N- to C-terminus: Nucleoporin SEH1 (364 aa).

WD repeat units lie at residues 10–49 (DHKD…EWHC), 55–96 (THSG…SNDK), 111–152 (DSRT…NLSQ), 160–210 (SCKL…RKYA), 217–258 (TVTD…RESA), and 276–315 (SHNS…NWKC).

Belongs to the WD repeat SEC13 family. Component of the Nup107-160 subcomplex of the nuclear pore complex (NPC). The Nup107-160 subcomplex includes NUP160, NUP133, NUP107, NUP98, NUP85, NUP43, NUP37, SEH1 and SEC13. Component of the GATOR2 subcomplex, composed of MIOS, SEC13, SEH1L, WDR24 and WDR59. The GATOR2 complex interacts with CASTOR1 and CASTOR2; the interaction is negatively regulated by arginine. The GATOR2 complex interacts with SESN1, SESN2 and SESN3; the interaction is negatively regulated by amino acids.

It localises to the chromosome. Its subcellular location is the centromere. The protein localises to the kinetochore. The protein resides in the nucleus. It is found in the nuclear pore complex. It localises to the lysosome membrane. The GATOR2 complex is negatively regulated by the upstream amino acid sensors CASTOR1 and SESN2, which sequester the GATOR2 complex in absence of amino acids. In the presence of abundant amino acids, GATOR2 is released from CASTOR1 and SESN2 and activated. Its function is as follows. Component of the Nup107-160 subcomplex of the nuclear pore complex (NPC). The Nup107-160 subcomplex is required for the assembly of a functional NPC. The Nup107-160 subcomplex is also required for normal kinetochore microtubule attachment, mitotic progression and chromosome segregation. This subunit plays a role in recruitment of the Nup107-160 subcomplex to the kinetochore. In terms of biological role, as a component of the GATOR2 complex, functions as an activator of the amino acid-sensing branch of the mTORC1 signaling pathway. The GATOR2 complex indirectly activates mTORC1 through the inhibition of the GATOR1 subcomplex. GATOR2 probably acts as an E3 ubiquitin-protein ligase toward GATOR1. In the presence of abundant amino acids, the GATOR2 complex mediates ubiquitination of the NPRL2 core component of the GATOR1 complex, leading to GATOR1 inactivation. In the absence of amino acids, GATOR2 is inhibited, activating the GATOR1 complex. The protein is Nucleoporin SEH1 (seh1l) of Danio rerio (Zebrafish).